Consider the following 460-residue polypeptide: MENIWLEAQTNLKQVLTEQTYSTWIDPLKFLGATVDTIVLEVPSSFFQKWVTDKYLAMIKEAISAVNGKSYQIEFHVADEKPEAAPEEKPEKEGKPAREKEKDKDKEKEKDREKEKDKKELVPNLNPKYTFESFVSGPSNQFAYAASQAVANKPATNYNPLFIYGGVGLGKTHLVNAIGNHILAKNPKAKICYYSSEKFMNEMINSLRYKKMDEFRNKFRKMDLLLIDDIQFMAGKEATQEEFFHTFNALYESHKQIVVTSDKFPKDIPGLEERLRSRFEWGLIADIQPPGVETKVAILKKKSDMHAVNLPDDVALFLAEGANSNIRELEGMLIRLEAFASLTGQEITLSMAREVMKDIIVEKTRDITVEMIQKTVAEHFRIKVSELKSDKRIKTLVVPRQIAIYICRELTKASYPEIGEKFGGKDHSTIIHSVKKIEKQMAGDDEFKASVEDIRKKLFT.

The segment at 1 to 83 (MENIWLEAQT…EFHVADEKPE (83 aa)) is domain I, interacts with DnaA modulators. Basic and acidic residues predominate over residues 78–121 (ADEKPEAAPEEKPEKEGKPAREKEKDKDKEKEKDREKEKDKKEL). The tract at residues 78–122 (ADEKPEAAPEEKPEKEGKPAREKEKDKDKEKEKDREKEKDKKELV) is disordered. The segment at 83-123 (EAAPEEKPEKEGKPAREKEKDKDKEKEKDREKEKDKKELVP) is domain II. The tract at residues 124–340 (NLNPKYTFES…GMLIRLEAFA (217 aa)) is domain III, AAA+ region. Gly-168, Gly-170, Lys-171, and Thr-172 together coordinate ATP. A domain IV, binds dsDNA region spans residues 341 to 460 (SLTGQEITLS…VEDIRKKLFT (120 aa)).

The protein belongs to the DnaA family. As to quaternary structure, oligomerizes as a right-handed, spiral filament on DNA at oriC.

It localises to the cytoplasm. Functionally, plays an essential role in the initiation and regulation of chromosomal replication. ATP-DnaA binds to the origin of replication (oriC) to initiate formation of the DNA replication initiation complex once per cell cycle. Binds the DnaA box (a 9 base pair repeat at the origin) and separates the double-stranded (ds)DNA. Forms a right-handed helical filament on oriC DNA; dsDNA binds to the exterior of the filament while single-stranded (ss)DNA is stabiized in the filament's interior. The ATP-DnaA-oriC complex binds and stabilizes one strand of the AT-rich DNA unwinding element (DUE), permitting loading of DNA polymerase. After initiation quickly degrades to an ADP-DnaA complex that is not apt for DNA replication. Binds acidic phospholipids. This is Chromosomal replication initiator protein DnaA from Geobacter sp. (strain M21).